Consider the following 184-residue polypeptide: Threonylcarbamoyl-AMP synthase (184 aa).

In terms of domain architecture, YrdC-like spans 1–184 (MNNLLAVIEL…IFTQHIFRQG (184 aa)).

Belongs to the SUA5 family. TsaC subfamily.

The protein resides in the cytoplasm. The enzyme catalyses L-threonine + hydrogencarbonate + ATP = L-threonylcarbamoyladenylate + diphosphate + H2O. Its function is as follows. Required for the formation of a threonylcarbamoyl group on adenosine at position 37 (t(6)A37) in tRNAs that read codons beginning with adenine. Catalyzes the conversion of L-threonine, HCO(3)(-)/CO(2) and ATP to give threonylcarbamoyl-AMP (TC-AMP) as the acyladenylate intermediate, with the release of diphosphate. In Haemophilus ducreyi (strain 35000HP / ATCC 700724), this protein is Threonylcarbamoyl-AMP synthase.